The sequence spans 433 residues: Zinc finger and SCAN domain-containing protein 4 (433 aa).

Residues 44–126 (RMVLNSFQDS…RFMEDLTDDS (83 aa)) enclose the SCAN box domain. Polar residues-rich tracts occupy residues 162–184 (SAQT…TSLE) and 277–298 (QPEQ…NSTC). 2 disordered regions span residues 162–199 (SAQT…CNSS) and 272–298 (AGCI…NSTC). 4 C2H2-type zinc fingers span residues 312-334 (YKCE…QRRH), 340-362 (FVCP…QIIH), 368-390 (FTCS…ERIH), and 396-418 (YTCP…MRTH). Positions 414 to 433 (HMRTHEKITPPSVPSTPEAS) are disordered.

The protein resides in the nucleus. The protein localises to the chromosome. It is found in the telomere. Its function is as follows. Embryonic stem (ES) cell-specific transcription factor required to regulate ES cell pluripotency. Binds telomeres and plays a key role in genomic stability in ES cells by regulating telomere elongation. Acts as an activator of spontaneous telomere sister chromatid exchange (T-SCE) and telomere elongation in undifferentiated ES cells. In Pongo pygmaeus (Bornean orangutan), this protein is Zinc finger and SCAN domain-containing protein 4 (ZSCAN4).